We begin with the raw amino-acid sequence, 172 residues long: uncharacterized protein (172 aa).

A signal peptide spans 1-22 (MKLFQLLLLVLTISSFIISNNG). The Extracellular segment spans residues 23–140 (LVESHQGRMH…FSYENSSNET (118 aa)). The interval 27–69 (HQGRMHRGSGERHHRAGGNQQQPQPPSEQQVESSYNSNDDGSS) is disordered. The span at 29 to 42 (GRMHRGSGERHHRA) shows a compositional bias: basic residues. Residues 53–69 (SEQQVESSYNSNDDGSS) show a composition bias toward low complexity. 2 N-linked (GlcNAc...) asparagine glycosylation sites follow: N135 and N138. A helical membrane pass occupies residues 141 to 161 (IVIYINPVTLVFTLVLLLTFI). Residues 162–172 (VLTITQSLRKY) are Cytoplasmic-facing.

Its subcellular location is the membrane. This is an uncharacterized protein from Dictyostelium discoideum (Social amoeba).